Reading from the N-terminus, the 66-residue chain is Large ribosomal subunit protein bL35 (66 aa).

This sequence belongs to the bacterial ribosomal protein bL35 family. Part of the 50S ribosomal subunit. Contacts proteins L15 and L33.

Binds the 23S rRNA. The sequence is that of Large ribosomal subunit protein bL35 (rpmI) from Deinococcus radiodurans (strain ATCC 13939 / DSM 20539 / JCM 16871 / CCUG 27074 / LMG 4051 / NBRC 15346 / NCIMB 9279 / VKM B-1422 / R1).